The chain runs to 279 residues: Small ribosomal subunit protein uS2 (279 aa).

Acidic residues-rich tracts occupy residues 1–18, 28–42, and 65–81; these read MTEN…DEAV, TATE…DESN, and ADAE…FDED. Residues 1–81 are disordered; it reads MTENDNEVVE…ELEGPTFDED (81 aa).

Belongs to the universal ribosomal protein uS2 family.

The polypeptide is Small ribosomal subunit protein uS2 (Haloquadratum walsbyi (strain DSM 16790 / HBSQ001)).